Here is a 470-residue protein sequence, read N- to C-terminus: Glutamyl-tRNA(Gln) amidotransferase subunit A (470 aa).

Active-site charge relay system residues include Lys71 and Ser146. Ser170 functions as the Acyl-ester intermediate in the catalytic mechanism.

The protein belongs to the amidase family. GatA subfamily. In terms of assembly, heterotrimer of A, B and C subunits.

The enzyme catalyses L-glutamyl-tRNA(Gln) + L-glutamine + ATP + H2O = L-glutaminyl-tRNA(Gln) + L-glutamate + ADP + phosphate + H(+). In terms of biological role, allows the formation of correctly charged Gln-tRNA(Gln) through the transamidation of misacylated Glu-tRNA(Gln) in organisms which lack glutaminyl-tRNA synthetase. The reaction takes place in the presence of glutamine and ATP through an activated gamma-phospho-Glu-tRNA(Gln). This is Glutamyl-tRNA(Gln) amidotransferase subunit A from Akkermansia muciniphila (strain ATCC BAA-835 / DSM 22959 / JCM 33894 / BCRC 81048 / CCUG 64013 / CIP 107961 / Muc).